A 585-amino-acid polypeptide reads, in one-letter code: A-type ATP synthase subunit A (585 aa).

Position 231–238 (231–238) interacts with ATP; sequence GPFGSGKT.

Belongs to the ATPase alpha/beta chains family. In terms of assembly, has multiple subunits with at least A(3), B(3), C, D, E, F, H, I and proteolipid K(x).

Its subcellular location is the cell membrane. The enzyme catalyses ATP + H2O + 4 H(+)(in) = ADP + phosphate + 5 H(+)(out). In terms of biological role, component of the A-type ATP synthase that produces ATP from ADP in the presence of a proton gradient across the membrane. The A chain is the catalytic subunit. In Thermococcus gammatolerans (strain DSM 15229 / JCM 11827 / EJ3), this protein is A-type ATP synthase subunit A.